Consider the following 365-residue polypeptide: Putrescine 2-hydroxylase (365 aa).

In terms of domain architecture, Rieske spans 44 to 141; it reads GHELMVPEVG…LQNWNGLLFE (98 aa). Positions 81, 83, 100, and 103 each coordinate [2Fe-2S] cluster.

The protein belongs to the bacterial ring-hydroxylating dioxygenase alpha subunit family. [2Fe-2S] cluster is required as a cofactor.

In terms of biological role, rieske-type iron sulfur protein that can catalyze in vitro the 2-hydroxylation of putrescine, forming 2-hydroxyputrescine. May be involved in the biosynthesis of the cyclic hydroxamate siderophore alcaligin. The protein is Putrescine 2-hydroxylase of Ralstonia nicotianae (strain ATCC BAA-1114 / GMI1000) (Ralstonia solanacearum).